The primary structure comprises 72 residues: UPF0346 protein GK1571 (72 aa).

Belongs to the UPF0346 family.

This Geobacillus kaustophilus (strain HTA426) protein is UPF0346 protein GK1571.